Here is a 248-residue protein sequence, read N- to C-terminus: Large ribosomal subunit protein uL4 (248 aa).

The segment at 45 to 105 (PYGADPYAGM…KDQSKSVNTK (61 aa)) is disordered. Over residues 92–105 (PKAEKDQSKSVNTK) the composition is skewed to basic and acidic residues.

Belongs to the universal ribosomal protein uL4 family. As to quaternary structure, part of the 50S ribosomal subunit.

One of the primary rRNA binding proteins, this protein initially binds near the 5'-end of the 23S rRNA. It is important during the early stages of 50S assembly. It makes multiple contacts with different domains of the 23S rRNA in the assembled 50S subunit and ribosome. Its function is as follows. Forms part of the polypeptide exit tunnel. The chain is Large ribosomal subunit protein uL4 from Haloquadratum walsbyi (strain DSM 16790 / HBSQ001).